The chain runs to 79 residues: Small ribosomal subunit protein eS17 (79 aa).

It belongs to the eukaryotic ribosomal protein eS17 family.

The protein is Small ribosomal subunit protein eS17 of Saccharolobus islandicus (strain Y.N.15.51 / Yellowstone #2) (Sulfolobus islandicus).